We begin with the raw amino-acid sequence, 286 residues long: Aminoglycoside N(3)-acetyltransferase III (286 aa).

The protein belongs to the antibiotic N-acetyltransferase family.

It carries out the reaction a 2-deoxystreptamine antibiotic + acetyl-CoA = an N(3)-acetyl-2-deoxystreptamine antibiotic + CoA + H(+). Its function is as follows. Resistance to antibiotics containing the 2-deoxy-streptamine ring including gentamicin, kanamycin, tobramycin, neomycin and apramycin. In Acinetobacter baumannii, this protein is Aminoglycoside N(3)-acetyltransferase III (aacC2).